The primary structure comprises 168 residues: Small ribosomal subunit protein uS9 (168 aa).

The span at 1–29 shows a compositional bias: low complexity; that stretch reads MAQNEELTAEAVEAEETLTSYTSESTSAE. Residues 1–36 are disordered; it reads MAQNEELTAEAVEAEETLTSYTSESTSAEDAPKKER.

The protein belongs to the universal ribosomal protein uS9 family.

The sequence is that of Small ribosomal subunit protein uS9 from Paenarthrobacter aurescens (strain TC1).